Consider the following 352-residue polypeptide: Minor capsid protein VP2 (352 aa).

The N-myristoyl glycine; by host moiety is linked to residue Gly-2. Residues 273-308 (SGEFIEKTLAPGGANQRIAPQWMLPLLLGLYGTVTP) are D1. A helical membrane pass occupies residues 290–310 (IAPQWMLPLLLGLYGTVTPAL). The interval 312 to 352 (AYEDAPSKKKRRMSRGSSQKAKGPRASSKTSYKRRRRSTRS) is disordered. The segment at 313–352 (YEDAPSKKKRRMSRGSSQKAKGPRASSKTSYKRRRRSTRS) is DNA-binding. A Nuclear localization signal motif is present at residues 316–324 (APSKKKRRM). Positions 342-352 (SYKRRRRSTRS) are enriched in basic residues.

It belongs to the polyomaviruses capsid protein VP2 family. As to quaternary structure, forms homooligomers, and heterooligomers with VP3 in the endoplasmic reticulum membrane. Interacts (via D1 domain) with VP1. Interacts (via D1 domain) with VP1.

The protein localises to the virion. It is found in the host nucleus. It localises to the host endoplasmic reticulum. The protein resides in the host endoplasmic reticulum membrane. In terms of biological role, structural protein that resides within the core of the capsid surrounded by 72 VP1 pentamers. Participates in host cell receptor binding together with VP1. Following virus endocytosis and trafficking to the endoplasmic reticulum, VP2 and VP3 form oligomers and integrate into the endoplasmic reticulum membrane. Heterooligomer VP2-VP3 may create a viroporin for transporting the viral genome across the endoplasmic reticulum membrane to the cytoplasm. Nuclear entry of the viral DNA involves the selective exposure and importin recognition of VP2 or VP3 nuclear localization signal (shared C-terminus). Plays a role in virion assembly within the nucleus in particular through a DNA-binding domain located in the C-terminal region. An N-terminal myristoylation suggests a scaffold function for virion assembly. Its function is as follows. Structural protein that resides within the core of the capsid surrounded by 72 VP1 pentamers. Following virus endocytosis and trafficking to the endoplasmic reticulum, VP2 and VP3 form oligomers and integrate into the endoplasmic reticulum membrane. Heterooligomer VP2-VP3 may create a viroporin for transporting the viral genome across the endoplasmic reticulum membrane to the cytoplasm. Nuclear entry of the viral DNA involves the selective exposure and importin recognition of VP2 or VP3 nuclear localization signal (shared C-terminus). Plays a role in virion assembly within the nucleus. May participate in host cell lysis when associated with VP4. Viroporin inducing perforation of cellular membranes to trigger virus progeny release. Forms pores of 3 nm inner diameter. VP4 is expressed about 24 hours after the late structural proteins and is not incorporated into the mature virion. The polypeptide is Minor capsid protein VP2 (Simian virus 12 (strain wt100) (SV-12)).